The following is a 227-amino-acid chain: Probable FKBP-type 25 kDa peptidyl-prolyl cis-trans isomerase (227 aa).

The 84-residue stretch at 144 to 227 folds into the PPIase FKBP-type domain; it reads ATQVHVRYRG…VFEIDLLGFR (84 aa).

This sequence belongs to the FKBP-type PPIase family.

The enzyme catalyses [protein]-peptidylproline (omega=180) = [protein]-peptidylproline (omega=0). In terms of biological role, PPIases accelerate the folding of proteins. This is Probable FKBP-type 25 kDa peptidyl-prolyl cis-trans isomerase (fkl) from Pseudomonas aeruginosa (strain ATCC 15692 / DSM 22644 / CIP 104116 / JCM 14847 / LMG 12228 / 1C / PRS 101 / PAO1).